The primary structure comprises 90 residues: Histone H1.M6.2 (90 aa).

Positions 1-90 (MSDAAVPPKK…KAVKKAPKKK (90 aa)) are disordered. The span at 11–90 (ASPKKAAAKK…KAVKKAPKKK (80 aa)) shows a compositional bias: basic residues.

It localises to the nucleus. The protein resides in the chromosome. The protein is Histone H1.M6.2 of Trypanosoma cruzi.